The following is a 362-amino-acid chain: Histidine protein methyltransferase 1 homolog (362 aa).

Residues lysine 28–proline 89 are disordered. A compositionally biased stretch (polar residues) spans serine 55 to aspartate 73. Residues serine 62 and serine 67 each carry the phosphoserine modification. Histidine 144 carries the tele-methylhistidine modification. Residues isoleucine 158–threonine 162, glycine 185, and glutamine 206–tyrosine 208 contribute to the S-adenosyl-L-methionine site. A Nuclear localization signal motif is present at residues proline 237–arginine 243. S-adenosyl-L-methionine is bound by residues glycine 259–tryptophan 261 and serine 283.

It belongs to the methyltransferase superfamily. METTL18 family. Interacts with GRWD1 and members of the heat shock protein 90 and 70 families; these proteins may possibly be methylation substrates for the enzyme. Monomethylated at His-144 through automethylation. Automethylation at His-144 positively regulates the methyltransferase activity toward RPL3. Probably methylated on other residues.

It is found in the cytoplasm. The protein localises to the cytosol. Its subcellular location is the nucleus. It localises to the nucleolus. It carries out the reaction L-histidyl-[protein] + S-adenosyl-L-methionine = N(tele)-methyl-L-histidyl-[protein] + S-adenosyl-L-homocysteine + H(+). Its function is as follows. Protein-L-histidine N-tele-methyltransferase that specifically monomethylates RPL3, thereby regulating translation elongation. Histidine methylation of RPL3 regulates translation elongation by slowing ribosome traversal on tyrosine codons: slower elongation provides enough time for proper folding of synthesized proteins and prevents cellular aggregation of tyrosine-rich proteins. The protein is Histidine protein methyltransferase 1 homolog of Rattus norvegicus (Rat).